The sequence spans 871 residues: Valine--tRNA ligase (871 aa).

The short motif at 47-57 is the 'HIGH' region element; it reads PNVTGRLHIGH. The 'KMSKS' region motif lies at 534–538; sequence KMSKS. An ATP-binding site is contributed by Lys537. Positions 805–871 form a coiled coil; it reads DLTPILNRLN…IEEELARLTR (67 aa).

Belongs to the class-I aminoacyl-tRNA synthetase family. ValS type 1 subfamily. As to quaternary structure, monomer.

The protein resides in the cytoplasm. The enzyme catalyses tRNA(Val) + L-valine + ATP = L-valyl-tRNA(Val) + AMP + diphosphate. Catalyzes the attachment of valine to tRNA(Val). As ValRS can inadvertently accommodate and process structurally similar amino acids such as threonine, to avoid such errors, it has a 'posttransfer' editing activity that hydrolyzes mischarged Thr-tRNA(Val) in a tRNA-dependent manner. The chain is Valine--tRNA ligase from Nitratiruptor sp. (strain SB155-2).